Consider the following 243-residue polypeptide: uncharacterized protein (243 aa).

The interval 157–181 (SEETKEQPDATTSEKSRSPECPKTT) is disordered.

This is an uncharacterized protein from Rattus norvegicus (Rat).